Here is an 80-residue protein sequence, read N- to C-terminus: Large ribosomal subunit protein uL24 (80 aa).

This sequence belongs to the universal ribosomal protein uL24 family. In terms of assembly, part of the 50S ribosomal subunit.

Its function is as follows. One of two assembly initiator proteins, it binds directly to the 5'-end of the 23S rRNA, where it nucleates assembly of the 50S subunit. In terms of biological role, one of the proteins that surrounds the polypeptide exit tunnel on the outside of the subunit. The polypeptide is Large ribosomal subunit protein uL24 (Chlorobium phaeobacteroides (strain DSM 266 / SMG 266 / 2430)).